Here is a 181-residue protein sequence, read N- to C-terminus: CDP-archaeol synthase (181 aa).

Transmembrane regions (helical) follow at residues valine 7–alanine 27, leucine 55–valine 75, leucine 88–leucine 108, leucine 126–glutamate 146, and threonine 147–threonine 167.

This sequence belongs to the CDP-archaeol synthase family. Requires Mg(2+) as cofactor.

The protein localises to the cell membrane. The enzyme catalyses 2,3-bis-O-(geranylgeranyl)-sn-glycerol 1-phosphate + CTP + H(+) = CDP-2,3-bis-O-(geranylgeranyl)-sn-glycerol + diphosphate. Its pathway is membrane lipid metabolism; glycerophospholipid metabolism. Functionally, catalyzes the formation of CDP-2,3-bis-(O-geranylgeranyl)-sn-glycerol (CDP-archaeol) from 2,3-bis-(O-geranylgeranyl)-sn-glycerol 1-phosphate (DGGGP) and CTP. This reaction is the third ether-bond-formation step in the biosynthesis of archaeal membrane lipids. This chain is CDP-archaeol synthase, found in Haloarcula marismortui (strain ATCC 43049 / DSM 3752 / JCM 8966 / VKM B-1809) (Halobacterium marismortui).